The following is a 53-amino-acid chain: MNQGKIWTVVNPSVGLPLLLGSVTVIAILVHAAVLSHTTWFPAYWQGGLKKAA.

Over 1–14 (MNQGKIWTVVNPSV) the chain is Cytoplasmic. A helical membrane pass occupies residues 15–35 (GLPLLLGSVTVIAILVHAAVL). H31 is an a bacteriochlorophyll binding site. Over 36–53 (SHTTWFPAYWQGGLKKAA) the chain is Periplasmic.

The protein belongs to the antenna complex alpha subunit family. In terms of assembly, the core complex is formed by different alpha and beta chains, binding bacteriochlorophyll molecules, and arranged most probably in tetrameric structures disposed around the reaction center. The non-pigmented gamma chains may constitute additional components.

The protein resides in the cell inner membrane. Antenna complexes are light-harvesting systems, which transfer the excitation energy to the reaction centers. The protein is Light-harvesting protein B-800/850 alpha chain of Rhodoblastus acidophilus (Rhodopseudomonas acidophila).